The sequence spans 359 residues: NADH-quinone oxidoreductase subunit H (359 aa).

8 helical membrane passes run 19 to 39, 94 to 114, 127 to 147, 175 to 195, 202 to 222, 255 to 275, 301 to 321, and 337 to 357; these read IGWF…FIAL, FLFV…FAVL, VGLF…LAAG, IALL…IILM, FLHW…IYFI, FAVI…IISI, VWGA…QMWL, and CWKV…IWVI.

The protein belongs to the complex I subunit 1 family. NDH-1 is composed of 14 different subunits. Subunits NuoA, H, J, K, L, M, N constitute the membrane sector of the complex.

It is found in the cell inner membrane. The enzyme catalyses a quinone + NADH + 5 H(+)(in) = a quinol + NAD(+) + 4 H(+)(out). In terms of biological role, NDH-1 shuttles electrons from NADH, via FMN and iron-sulfur (Fe-S) centers, to quinones in the respiratory chain. The immediate electron acceptor for the enzyme in this species is believed to be ubiquinone. Couples the redox reaction to proton translocation (for every two electrons transferred, four hydrogen ions are translocated across the cytoplasmic membrane), and thus conserves the redox energy in a proton gradient. This subunit may bind ubiquinone. The chain is NADH-quinone oxidoreductase subunit H from Chlorobaculum tepidum (strain ATCC 49652 / DSM 12025 / NBRC 103806 / TLS) (Chlorobium tepidum).